The following is a 240-amino-acid chain: Transcriptional regulatory protein ChvI (240 aa).

The region spanning 3 to 116 (TIALVDDDRN…LLVERVKAIL (114 aa)) is the Response regulatory domain. Residues D8, D9, and D52 each contribute to the Mg(2+) site. The residue at position 52 (D52) is a 4-aspartylphosphate. The segment at residues 139–238 (SRSLERGQLV…LYGVGYRFRE (100 aa)) is a DNA-binding region (ompR/PhoB-type).

Requires Mg(2+) as cofactor. Phosphorylated by ChvG.

Its subcellular location is the cytoplasm. It participates in glycan metabolism; exopolysaccharide biosynthesis. In terms of biological role, member of a two-component regulatory system ChvG(ExoS)/ChvI involved in regulating the production of succinoglycan. In Rhizobium meliloti (strain 1021) (Ensifer meliloti), this protein is Transcriptional regulatory protein ChvI (chvI).